Reading from the N-terminus, the 97-residue chain is Large ribosomal subunit protein uL23 (97 aa).

This sequence belongs to the universal ribosomal protein uL23 family. Part of the 50S ribosomal subunit. Contacts protein L29, and trigger factor when it is bound to the ribosome.

One of the early assembly proteins it binds 23S rRNA. One of the proteins that surrounds the polypeptide exit tunnel on the outside of the ribosome. Forms the main docking site for trigger factor binding to the ribosome. This Sinorhizobium fredii (strain NBRC 101917 / NGR234) protein is Large ribosomal subunit protein uL23.